A 173-amino-acid chain; its full sequence is Large ribosomal subunit protein uL5 (173 aa).

It belongs to the universal ribosomal protein uL5 family. Component of the large ribosomal subunit.

Its subcellular location is the nucleus. It is found in the cytoplasm. Component of the ribosome, a large ribonucleoprotein complex responsible for the synthesis of proteins in the cell. The small ribosomal subunit (SSU) binds messenger RNAs (mRNAs) and translates the encoded message by selecting cognate aminoacyl-transfer RNA (tRNA) molecules. The large subunit (LSU) contains the ribosomal catalytic site termed the peptidyl transferase center (PTC), which catalyzes the formation of peptide bonds, thereby polymerizing the amino acids delivered by tRNAs into a polypeptide chain. The nascent polypeptides leave the ribosome through a tunnel in the LSU and interact with protein factors that function in enzymatic processing, targeting, and the membrane insertion of nascent chains at the exit of the ribosomal tunnel. The sequence is that of Large ribosomal subunit protein uL5 (RPL11) from Encephalitozoon cuniculi (strain GB-M1) (Microsporidian parasite).